The sequence spans 129 residues: DNA-directed RNA polymerase subunit omega (129 aa).

Positions 76-101 are disordered; that stretch reads EVDEPEPDPVTLAASAADGEDDDQPE.

The protein belongs to the RNA polymerase subunit omega family. The RNAP catalytic core consists of 2 alpha, 1 beta, 1 beta' and 1 omega subunit. When a sigma factor is associated with the core the holoenzyme is formed, which can initiate transcription.

It carries out the reaction RNA(n) + a ribonucleoside 5'-triphosphate = RNA(n+1) + diphosphate. Promotes RNA polymerase assembly. Latches the N- and C-terminal regions of the beta' subunit thereby facilitating its interaction with the beta and alpha subunits. This Agrobacterium fabrum (strain C58 / ATCC 33970) (Agrobacterium tumefaciens (strain C58)) protein is DNA-directed RNA polymerase subunit omega.